We begin with the raw amino-acid sequence, 112 residues long: UPF0342 protein STH1710 (112 aa).

It belongs to the UPF0342 family.

This chain is UPF0342 protein STH1710, found in Symbiobacterium thermophilum (strain DSM 24528 / JCM 14929 / IAM 14863 / T).